The following is a 27-amino-acid chain: Conotoxin Bt9.2 (27 aa).

3 disulfides stabilise this stretch: cysteine 2-cysteine 16, cysteine 6-cysteine 19, and cysteine 12-cysteine 24. Residue proline 13 is modified to 4-hydroxyproline.

In terms of tissue distribution, expressed by the venom duct.

The protein localises to the secreted. Functionally, probable neurotoxin that inhibits ion channels. The sequence is that of Conotoxin Bt9.2 from Conus betulinus (Beech cone).